The sequence spans 661 residues: UvrABC system protein B (661 aa).

Residues 26–181 enclose the Helicase ATP-binding domain; the sequence is KGIQEGRKHQ…LLRKLVDIQY (156 aa). 39–46 contacts ATP; the sequence is GATGTGKT. The Beta-hairpin motif lies at 92 to 115; it reads YYDYYQPEAYVPQTDTFIEKDASI. One can recognise a Helicase C-terminal domain in the interval 430–596; the sequence is QIDDLIGEIQ…TINKEIRDVI (167 aa). A UVR domain is found at 625-660; that stretch reads QKVVEQMEHEMKEAARALDFERAAELRDLLLELKAE.

Belongs to the UvrB family. As to quaternary structure, forms a heterotetramer with UvrA during the search for lesions. Interacts with UvrC in an incision complex.

It localises to the cytoplasm. Its function is as follows. The UvrABC repair system catalyzes the recognition and processing of DNA lesions. A damage recognition complex composed of 2 UvrA and 2 UvrB subunits scans DNA for abnormalities. Upon binding of the UvrA(2)B(2) complex to a putative damaged site, the DNA wraps around one UvrB monomer. DNA wrap is dependent on ATP binding by UvrB and probably causes local melting of the DNA helix, facilitating insertion of UvrB beta-hairpin between the DNA strands. Then UvrB probes one DNA strand for the presence of a lesion. If a lesion is found the UvrA subunits dissociate and the UvrB-DNA preincision complex is formed. This complex is subsequently bound by UvrC and the second UvrB is released. If no lesion is found, the DNA wraps around the other UvrB subunit that will check the other stand for damage. The chain is UvrABC system protein B from Bacillus velezensis (strain DSM 23117 / BGSC 10A6 / LMG 26770 / FZB42) (Bacillus amyloliquefaciens subsp. plantarum).